We begin with the raw amino-acid sequence, 341 residues long: Protein-glutamate methylesterase/protein-glutamine glutaminase 1 (341 aa).

The 118-residue stretch at 2-119 (KVGIVNDSAL…SDAKLTAGPL (118 aa)) folds into the Response regulatory domain. Position 53 is a 4-aspartylphosphate (aspartate 53). In terms of domain architecture, CheB-type methylesterase spans 146 to 331 (TLAASRLVAI…LTAIAPRLVQ (186 aa)). Active-site residues include serine 158, histidine 185, and aspartate 278.

The protein belongs to the CheB family. In terms of processing, phosphorylated by CheA. Phosphorylation of the N-terminal regulatory domain activates the methylesterase activity.

It is found in the cytoplasm. It catalyses the reaction [protein]-L-glutamate 5-O-methyl ester + H2O = L-glutamyl-[protein] + methanol + H(+). It carries out the reaction L-glutaminyl-[protein] + H2O = L-glutamyl-[protein] + NH4(+). Its function is as follows. Involved in chemotaxis. Part of a chemotaxis signal transduction system that modulates chemotaxis in response to various stimuli. Catalyzes the demethylation of specific methylglutamate residues introduced into the chemoreceptors (methyl-accepting chemotaxis proteins or MCP) by CheR. Also mediates the irreversible deamidation of specific glutamine residues to glutamic acid. The chain is Protein-glutamate methylesterase/protein-glutamine glutaminase 1 from Cupriavidus pinatubonensis (strain JMP 134 / LMG 1197) (Cupriavidus necator (strain JMP 134)).